The primary structure comprises 369 residues: Proton-coupled zinc antiporter SLC30A8 (369 aa).

Over methionine 1–alanine 79 the chain is Cytoplasmic. Positions proline 31–histidine 52 are disordered. The segment covering valine 32–glutamate 44 has biased composition (basic and acidic residues). Zn(2+)-binding residues include histidine 52, cysteine 53, and histidine 54. An HCH Motif; seals regulatory zinc-binding pocket motif is present at residues histidine 52–histidine 54. The chain crosses the membrane as a helical span at residues isoleucine 80–valine 100. Residues valine 101–aspartate 103 are Lumenal, vesicle-facing. The helical transmembrane segment at alanine 104–serine 124 threads the bilayer. 3 residues coordinate Zn(2+): histidine 106, aspartate 110, and histidine 137. Residues serine 125 to glutamate 140 lie on the Cytoplasmic side of the membrane. A helical transmembrane segment spans residues isoleucine 141–leucine 161. The Lumenal, vesicle portion of the chain corresponds to alanine 162 to alanine 175. Residues threonine 176–leucine 196 traverse the membrane as a helical segment. The Cytoplasmic portion of the chain corresponds to histidine 197 to alanine 217. The helical transmembrane segment at phenylalanine 218–isoleucine 238 threads the bilayer. Zn(2+) contacts are provided by histidine 220 and aspartate 224. Over tyrosine 239–lysine 245 the chain is Lumenal, vesicle. A helical membrane pass occupies residues isoleucine 246–isoleucine 266. Residues leucine 267 to aspartate 369 are Cytoplasmic-facing. Zn(2+) contacts are provided by histidine 301, histidine 318, histidine 345, glutamate 352, cysteine 361, and cysteine 364.

Belongs to the cation diffusion facilitator (CDF) transporter (TC 2.A.4) family. SLC30A subfamily. Homodimer. In the endocrine pancreas, expressed in insulin-producing beta cells. Expressed at relatively high levels in subcutaneous fat tissue from lean persons; much lower levels in visceral fat, whether from lean or obese individuals, and in subcutaneous fat tissue from obese individuals. Expressed in peripheral blood mononuclear cells, including T-cells and B-cells, with great variation among individuals ranging from negative to strongly positive.

It localises to the cytoplasmic vesicle. The protein localises to the secretory vesicle membrane. Its subcellular location is the cell membrane. The catalysed reaction is Zn(2+)(in) + 2 H(+)(out) = Zn(2+)(out) + 2 H(+)(in). Functionally, proton-coupled zinc ion antiporter mediating the entry of zinc into the lumen of pancreatic beta cell secretory granules, thereby regulating insulin secretion. In Homo sapiens (Human), this protein is Proton-coupled zinc antiporter SLC30A8.